The chain runs to 486 residues: Membrane-bound lytic murein transglycosylase F (486 aa).

Residues 1-21 (MTRIKLNYFVIGVVALLLALA) form the signal peptide. A non-LT domain region spans residues 22–268 (LWPNIPWRNG…RLEEKYLGHV (247 aa)). The LT domain stretch occupies residues 269 to 486 (GSFDYVDTKT…VVGPGWSINN (218 aa)). The active site involves glutamate 313.

The protein in the N-terminal section; belongs to the bacterial solute-binding protein 3 family. It in the C-terminal section; belongs to the transglycosylase Slt family.

It localises to the cell outer membrane. It catalyses the reaction Exolytic cleavage of the (1-&gt;4)-beta-glycosidic linkage between N-acetylmuramic acid (MurNAc) and N-acetylglucosamine (GlcNAc) residues in peptidoglycan, from either the reducing or the non-reducing ends of the peptidoglycan chains, with concomitant formation of a 1,6-anhydrobond in the MurNAc residue.. Functionally, murein-degrading enzyme that degrades murein glycan strands and insoluble, high-molecular weight murein sacculi, with the concomitant formation of a 1,6-anhydromuramoyl product. Lytic transglycosylases (LTs) play an integral role in the metabolism of the peptidoglycan (PG) sacculus. Their lytic action creates space within the PG sacculus to allow for its expansion as well as for the insertion of various structures such as secretion systems and flagella. The polypeptide is Membrane-bound lytic murein transglycosylase F (Yersinia enterocolitica serotype O:8 / biotype 1B (strain NCTC 13174 / 8081)).